A 386-amino-acid chain; its full sequence is DNA (cytosine-5)-methyltransferase 3-like (386 aa).

Residues 41–173 form the ADD domain; the sequence is EVKANQRNIE…LKAFYDRESE (133 aa). The GATA-type; atypical zinc finger occupies 52 to 82; sequence ICICCGSLQVHTQHPLFEGGICAPCKDKFLD. The segment at 93–149 adopts a PHD-type; atypical zinc-finger fold; sequence QSYCSICCSGETLLICGNPDCTRCYCFECVDSLVGPGTSGKVHAMSNWVCYLCLPSS.

In terms of assembly, homodimer. Heterotetramer composed of 1 DNMT3A homodimer and 2 DNMT3L subunits (DNMT3L-DNMT3A-DNMT3A-DNMT3L). Interacts with histone H3 (via N-terminus); interaction is strongly inhibited by methylation at lysine 4 (H3K4me). Interacts with EZH2; the interaction is direct. Interacts with SPOCD1. As to expression, expressed at low levels in several tissues including testis, ovary, and thymus.

It localises to the nucleus. Catalytically inactive regulatory factor of DNA methyltransferases that can either promote or inhibit DNA methylation depending on the context. Essential for the function of DNMT3A and DNMT3B: activates DNMT3A and DNMT3B by binding to their catalytic domain. Acts by accelerating the binding of DNA and S-adenosyl-L-methionine (AdoMet) to the methyltransferases and dissociates from the complex after DNA binding to the methyltransferases. Recognizes unmethylated histone H3 lysine 4 (H3K4me0) and induces de novo DNA methylation by recruitment or activation of DNMT3. Plays a key role in embryonic stem cells and germ cells. In germ cells, required for the methylation of imprinted loci together with DNMT3A. In male germ cells, specifically required to methylate retrotransposons, preventing their mobilization. Plays a key role in embryonic stem cells (ESCs) by acting both as an positive and negative regulator of DNA methylation. While it promotes DNA methylation of housekeeping genes together with DNMT3A and DNMT3B, it also acts as an inhibitor of DNA methylation at the promoter of bivalent genes. Interacts with the EZH2 component of the PRC2/EED-EZH2 complex, preventing interaction of DNMT3A and DNMT3B with the PRC2/EED-EZH2 complex, leading to maintain low methylation levels at the promoters of bivalent genes. Promotes differentiation of ESCs into primordial germ cells by inhibiting DNA methylation at the promoter of RHOX5, thereby activating its expression. The chain is DNA (cytosine-5)-methyltransferase 3-like (DNMT3L) from Homo sapiens (Human).